The following is a 510-amino-acid chain: NAD(P)H-quinone oxidoreductase subunit 2 B, chloroplastic (510 aa).

14 helical membrane passes run 31–51 (FIFPECILIFGLILLLMIDLT), 59–79 (WFYFISSTSLVISITALLFRW), 99–119 (IFQFLILLCSTLCIPLSVEYI), 124–144 (MAITEFLLFVLTATLGGMFLC), 149–169 (LITIFVALECFSLCSYLLSGY), 184–204 (LLMGGASSSILVYGFSWLYGL), 229–249 (ISIALIFITVGLGFKLSLAPF), 261–281 (PTPVVAFLSVTSKVAALALAT), 295–315 (WHLLLEILAILSMILGNLLAI), 323–343 (MLAYSSIGQIGYVIIGIIVGD), 354–374 (YMLFYISMNLGTFACIVLFGL), 395–415 (ALSLALCLLSLGGLPPLAGFF), 418–438 (LYLFWCGWQAGLYFLVSIGLL), and 484–504 (MTVCVIASTILGISMNPILAI).

This sequence belongs to the complex I subunit 2 family. NDH is composed of at least 16 different subunits, 5 of which are encoded in the nucleus.

It is found in the plastid. It localises to the chloroplast thylakoid membrane. It carries out the reaction a plastoquinone + NADH + (n+1) H(+)(in) = a plastoquinol + NAD(+) + n H(+)(out). The catalysed reaction is a plastoquinone + NADPH + (n+1) H(+)(in) = a plastoquinol + NADP(+) + n H(+)(out). Its function is as follows. NDH shuttles electrons from NAD(P)H:plastoquinone, via FMN and iron-sulfur (Fe-S) centers, to quinones in the photosynthetic chain and possibly in a chloroplast respiratory chain. The immediate electron acceptor for the enzyme in this species is believed to be plastoquinone. Couples the redox reaction to proton translocation, and thus conserves the redox energy in a proton gradient. The sequence is that of NAD(P)H-quinone oxidoreductase subunit 2 B, chloroplastic from Hordeum vulgare (Barley).